The chain runs to 185 residues: Threonylcarbamoyl-AMP synthase (185 aa).

In terms of domain architecture, YrdC-like spans 1 to 185; that stretch reads MKNFEQVLKA…AKTSQILRQG (185 aa). The tract at residues 163 to 185 is disordered; it reads ETSGRNKPSEIRDAKTSQILRQG. Residues 164–177 are compositionally biased toward basic and acidic residues; that stretch reads TSGRNKPSEIRDAK.

Belongs to the SUA5 family. TsaC subfamily.

Its subcellular location is the cytoplasm. It catalyses the reaction L-threonine + hydrogencarbonate + ATP = L-threonylcarbamoyladenylate + diphosphate + H2O. In terms of biological role, required for the formation of a threonylcarbamoyl group on adenosine at position 37 (t(6)A37) in tRNAs that read codons beginning with adenine. Catalyzes the conversion of L-threonine, HCO(3)(-)/CO(2) and ATP to give threonylcarbamoyl-AMP (TC-AMP) as the acyladenylate intermediate, with the release of diphosphate. The protein is Threonylcarbamoyl-AMP synthase of Vibrio campbellii (strain ATCC BAA-1116).